Here is a 249-residue protein sequence, read N- to C-terminus: Interleukin-1 receptor-associated kinase 1-binding protein 1 homolog (249 aa).

Belongs to the IRAK1BP1 family.

The protein localises to the cytoplasm. The protein resides in the nucleus. Its function is as follows. May be part of a signaling pathway that leads to NF-kappa-B activation. The sequence is that of Interleukin-1 receptor-associated kinase 1-binding protein 1 homolog (irak1bp1) from Danio rerio (Zebrafish).